The chain runs to 168 residues: MVEDILAPGLRVVFCGINPGLSSAGTGFPFAHPANRFWKVIYQAGFTDRQLKPQEAQHLLDYRCGVTKLVDRPTVQASEVSKQELHAGGRKLIEKIEDYQPQALAILGKQAYEQGFSQRGAQWGKQTLTIGSTQIWVLPNPSGLSRVSLEKLVEAYRELDQALVVRGR.

Belongs to the uracil-DNA glycosylase (UDG) superfamily. TDG/mug family. Binds DNA as a monomer.

The protein localises to the cytoplasm. The catalysed reaction is Specifically hydrolyzes mismatched double-stranded DNA and polynucleotides, releasing free uracil.. Functionally, excises ethenocytosine and uracil, which can arise by alkylation or deamination of cytosine, respectively, from the corresponding mispairs with guanine in ds-DNA. It is capable of hydrolyzing the carbon-nitrogen bond between the sugar-phosphate backbone of the DNA and the mispaired base. The complementary strand guanine functions in substrate recognition. Required for DNA damage lesion repair in stationary-phase cells. In Escherichia coli O9:H4 (strain HS), this protein is G/U mismatch-specific DNA glycosylase.